Here is a 425-residue protein sequence, read N- to C-terminus: Glutamate-1-semialdehyde 2,1-aminomutase (425 aa).

Position 265 is an N6-(pyridoxal phosphate)lysine (lysine 265).

This sequence belongs to the class-III pyridoxal-phosphate-dependent aminotransferase family. HemL subfamily. In terms of assembly, homodimer. Requires pyridoxal 5'-phosphate as cofactor.

It localises to the cytoplasm. It carries out the reaction (S)-4-amino-5-oxopentanoate = 5-aminolevulinate. Its pathway is porphyrin-containing compound metabolism; protoporphyrin-IX biosynthesis; 5-aminolevulinate from L-glutamyl-tRNA(Glu): step 2/2. The polypeptide is Glutamate-1-semialdehyde 2,1-aminomutase (Opitutus terrae (strain DSM 11246 / JCM 15787 / PB90-1)).